A 232-amino-acid polypeptide reads, in one-letter code: Orotidine 5'-phosphate decarboxylase (232 aa).

Residues Asp-10, Lys-32, 59–68 (DLKFHDIPNT), Thr-119, Arg-180, Gln-189, Gly-209, and Arg-210 contribute to the substrate site. The Proton donor role is filled by Lys-61.

This sequence belongs to the OMP decarboxylase family. Type 1 subfamily. Homodimer.

It carries out the reaction orotidine 5'-phosphate + H(+) = UMP + CO2. Its pathway is pyrimidine metabolism; UMP biosynthesis via de novo pathway; UMP from orotate: step 2/2. Functionally, catalyzes the decarboxylation of orotidine 5'-monophosphate (OMP) to uridine 5'-monophosphate (UMP). The protein is Orotidine 5'-phosphate decarboxylase of Actinobacillus succinogenes (strain ATCC 55618 / DSM 22257 / CCUG 43843 / 130Z).